A 483-amino-acid polypeptide reads, in one-letter code: Acetyltransferase AOL_s00215g273 (483 aa).

The next 8 membrane-spanning stretches (helical) occupy residues 9–29 (ALIG…TSFV), 33–53 (IYPL…TEGL), 141–161 (VAYI…LYTC), 191–211 (IFQM…SVLV), 292–312 (FLVF…VYYG), 334–354 (VTGY…FICW), 372–392 (WFVG…VLWI), and 453–473 (LGGY…GSGF).

This sequence belongs to the wax synthase family.

Its subcellular location is the membrane. It participates in secondary metabolite biosynthesis; terpenoid biosynthesis. In terms of biological role, acetyltransferase; part of the gene cluster that mediates the biosynthesis of sesquiterpenyl epoxy-cyclohexenoids (SECs) such as anthrobotrisins and arthrosporols, metabolites that possess a novel hybrid carbon skeleton consisting of a polyketide-derived epoxycyclohexenol combined with a terpenoid-derived monocyclic sesquiterpenol substructure (PKS-PTS hybrid). The SEC pathway plays an important role for fungal soil colonization via decreasing fungal nematode-capturing ability. The role of the acetyltransferase in SEC biosynthesis has still to be determined. The pathway begins with the biosynthesis of 6-methylsalicylic acid (6-MSA), the first precursor of the polyketide-derived epoxycyclohexenol in arthrosporols, by the polyketide synthase (PKS) AOL_s00215g283 via condensation of 1 acetate and 3 malonate units. The 6-methylsalicylic acid decarboxylase AOL_s00215g281 then catalyzes the decarboxylation of 6-methylsalicylic acid to yield m-cresol. The cytochrome P450 monooxygenase AOL_s00215g282 further oxidizes m-cresol to yield toluquinol. With the assistance of the oxidoreductase AOL_s00215g277, the polyprenyl transferase AOL_s00215g276 catalyzes the farnesylation of toluquinol to produce farnesyl hydroquinone, the hybrid precursor for biosynthesis of SECs. Farnesyl hydroquinone undergoes epoxidation and then subsequent dehydrogenation to form farnesyl epoxy-quinone, the first and simplest SEC. The cytochrome P450 monooxygenase AOL_s00215g278 and the FAD-dependent monooxygenase AOL_s00215g279 might be involved in the oxygenation of the phenol moiety, most likely in the epoxy formation. The cytochrome P450 monooxygenases AOL_s00215g274 and AOL_s00215g280 are involved in specific regional ketone reductions at respectively C-4 and C-1 of farnesyl epoxy-quinone PubMed:33823587. This is Acetyltransferase AOL_s00215g273 from Arthrobotrys oligospora (strain ATCC 24927 / CBS 115.81 / DSM 1491) (Nematode-trapping fungus).